A 480-amino-acid chain; its full sequence is ATP synthase subunit beta (480 aa).

166 to 173 (GGAGVGKT) is an ATP binding site.

Belongs to the ATPase alpha/beta chains family. F-type ATPases have 2 components, CF(1) - the catalytic core - and CF(0) - the membrane proton channel. CF(1) has five subunits: alpha(3), beta(3), gamma(1), delta(1), epsilon(1). CF(0) has three main subunits: a(1), b(2) and c(9-12). The alpha and beta chains form an alternating ring which encloses part of the gamma chain. CF(1) is attached to CF(0) by a central stalk formed by the gamma and epsilon chains, while a peripheral stalk is formed by the delta and b chains.

The protein resides in the cell membrane. The enzyme catalyses ATP + H2O + 4 H(+)(in) = ADP + phosphate + 5 H(+)(out). Its function is as follows. Produces ATP from ADP in the presence of a proton gradient across the membrane. The catalytic sites are hosted primarily by the beta subunits. The chain is ATP synthase subunit beta from Streptomyces griseus subsp. griseus (strain JCM 4626 / CBS 651.72 / NBRC 13350 / KCC S-0626 / ISP 5235).